A 362-amino-acid polypeptide reads, in one-letter code: ATPase ARSA2 (362 aa).

27–34 contacts ATP; it reads KGGVGKTT. Asp58 is a catalytic residue. Glu235 and Asn262 together coordinate ATP.

This sequence belongs to the arsA ATPase family. In terms of assembly, homodimer. Interacts with SEC61B.

The protein localises to the cytoplasm. The protein resides in the cytosol. It is found in the endoplasmic reticulum. In terms of biological role, ATPase required for the post-translational delivery of tail-anchored (TA) proteins to the endoplasmic reticulum. Recognizes and selectively binds the transmembrane domain of TA proteins in the cytosol. This complex then targets to the endoplasmic reticulum by membrane-bound receptors, where the tail-anchored protein is released for insertion. This process is regulated by ATP binding and hydrolysis. ATP binding drives the homodimer towards the closed dimer state, facilitating recognition of newly synthesized TA membrane proteins. ATP hydrolysis is required for insertion. Subsequently, the homodimer reverts towards the open dimer state, lowering its affinity for the membrane-bound receptor, and returning it to the cytosol to initiate a new round of targeting. This chain is ATPase ARSA2, found in Chlamydomonas reinhardtii (Chlamydomonas smithii).